A 468-amino-acid polypeptide reads, in one-letter code: MTNAKTLYQKVWDAHIVAAPEGEAPVIYVDRHLVHEVTSPQAFSGLKVAGRKLRAPEKTFATMDHNTSTRSASLDALSPMARTQVETLAQNCKDFGVRLYDIHHPNQGIVHVMGPELGITLPGTVIVCGDSHTATHGAFGALAFGIGTSEVEHVLATQTLRQLKAKTMKIEVRGHVTDGVTAKDIVLAIIGKIGMDGGTGYVVEFCGEAIEALSMEGRMTVCNMAIEMGAKAGMVAPDQTTFDYLAGREFAPKGEDWAEAVAYWKAIKTDDGAVFDAIVELDAADIAPQLTWGTNPGQVVAIDGKVPDPINEANPSTRASMEKALEYIGLSAGTPMTDISINKVFIGSCTNSRIEDLRSAAVHAKGRKVASGVTAIVVPGSGQVKAQAEAEGLDKIFIEAGFEWRLPGCSMCLAMNDDRLEAGDRCASTSNRNFEGRQGRGSRTHLVSPAMAAAAAVAGHFVDIRKPY.

Residues cysteine 349, cysteine 409, and cysteine 412 each coordinate [4Fe-4S] cluster.

This sequence belongs to the aconitase/IPM isomerase family. LeuC type 1 subfamily. In terms of assembly, heterodimer of LeuC and LeuD. [4Fe-4S] cluster is required as a cofactor.

It carries out the reaction (2R,3S)-3-isopropylmalate = (2S)-2-isopropylmalate. The protein operates within amino-acid biosynthesis; L-leucine biosynthesis; L-leucine from 3-methyl-2-oxobutanoate: step 2/4. Its function is as follows. Catalyzes the isomerization between 2-isopropylmalate and 3-isopropylmalate, via the formation of 2-isopropylmaleate. This is 3-isopropylmalate dehydratase large subunit from Shewanella baltica (strain OS185).